The primary structure comprises 364 residues: Monocarboxylate 2-oxoacid-binding periplasmic protein all3028 (364 aa).

The first 26 residues, 1–26, serve as a signal peptide directing secretion; that stretch reads MKRREVLNTAAIATATTALVSCTQTN. Residues 103 to 104, Gln160, and Arg181 contribute to the substrate site; that span reads YY. Na(+) is bound at residue Gln160. Positions 218, 219, and 244 each coordinate Na(+).

The protein belongs to the bacterial solute-binding protein 7 family. In terms of assembly, homodimer. The complex comprises the extracytoplasmic solute receptor protein all3028, and the two putative transmembrane proteins alr3026 and alr3027.

It is found in the periplasm. Its activity is regulated as follows. Pyruvate uptake inhibited by 2-oxobutyrate, 2-oxovalerate, 2-oxoisovalerate, 2-oxoisocaproate and 2-oxo-3-methylvalerate. Its function is as follows. Part of the tripartite ATP-independent periplasmic (TRAP) transport system involved in the uptake of monocarboxylate 2-oxoacids. This protein specifically binds monocarboxylate 2-oxoacids including pyruvate, 2-oxobutyrate, 2-oxovalerate, 2-oxoisovalerate, 2-oxoisocaproate and 2-oxo-3-methylvalerate. Is not able to bind mannitol. This is Monocarboxylate 2-oxoacid-binding periplasmic protein all3028 from Nostoc sp. (strain PCC 7120 / SAG 25.82 / UTEX 2576).